Consider the following 328-residue polypeptide: MLGFIIRPPHQLLSLLSCPGLRIPRFSVLCAPPRLRTMAASSSFSELPLVAVCQVTSTPDKEQNFKTCAELIREAARLGACLAFLPEAFDFIARDPEETRRLSEPLSGNLLEEYTQLARECGLWLSLGGFHERGQDWEQTQKIYNCHVIMNNMGSVVATYRKTHLCDVEIPGQGPMRESNSTIPGPSLESPISTPAGKIGLAICYDMRFPELSLALVQAGAEILTYPSAFGSVTGPAHWEVLLRARAIETQCYVVAAAQCGRHHEKRASYGHSMVVDPWGTVVARCSEGPGLCLARIDLNYLQQLRKQLPVFQHRRPDLYGNLGHPLS.

The N-terminal 37 residues, 1-37 (MLGFIIRPPHQLLSLLSCPGLRIPRFSVLCAPPRLRT), are a transit peptide targeting the mitochondrion. In terms of domain architecture, CN hydrolase spans 47-299 (LPLVAVCQVT…PGLCLARIDL (253 aa)). Residue Glu87 is the Proton acceptor of the active site. Catalysis depends on Lys162, which acts as the Proton donor. The Nucleophile role is filled by Cys204.

The protein belongs to the carbon-nitrogen hydrolase superfamily. NIT1/NIT2 family.

Its subcellular location is the cytoplasm. It localises to the mitochondrion. It carries out the reaction N-(4-oxoglutaryl)-L-cysteinylglycine + H2O = L-cysteinylglycine + 2-oxoglutarate. Its function is as follows. Catalyzes the hydrolysis of the amide bond in N-(4-oxoglutarate)-L-cysteinylglycine (deaminated glutathione), a metabolite repair reaction to dispose of the harmful deaminated glutathione. Plays a role in cell growth and apoptosis. Has tumor suppressor properties that enhances the apoptotic responsiveness in cancer cells. It is also a negative regulator of primary T-cells. This Bos taurus (Bovine) protein is Deaminated glutathione amidase (NIT1).